The chain runs to 296 residues: Phosphatidylglycerol--prolipoprotein diacylglyceryl transferase (296 aa).

7 consecutive transmembrane segments (helical) span residues 17–37 (LAVR…IVVG), 59–79 (MMFY…VLFY), 97–117 (GGMS…LFAW), 129–149 (FVAP…FING), 204–224 (SQLY…FLFA), 230–250 (MGAI…TVEF), and 257–277 (FLGL…PMIL). Arg-142 contacts a 1,2-diacyl-sn-glycero-3-phospho-(1'-sn-glycerol).

This sequence belongs to the Lgt family.

It localises to the cell inner membrane. It catalyses the reaction L-cysteinyl-[prolipoprotein] + a 1,2-diacyl-sn-glycero-3-phospho-(1'-sn-glycerol) = an S-1,2-diacyl-sn-glyceryl-L-cysteinyl-[prolipoprotein] + sn-glycerol 1-phosphate + H(+). The protein operates within protein modification; lipoprotein biosynthesis (diacylglyceryl transfer). Its function is as follows. Catalyzes the transfer of the diacylglyceryl group from phosphatidylglycerol to the sulfhydryl group of the N-terminal cysteine of a prolipoprotein, the first step in the formation of mature lipoproteins. This is Phosphatidylglycerol--prolipoprotein diacylglyceryl transferase from Burkholderia cenocepacia (strain HI2424).